The following is a 366-amino-acid chain: Probable cyclin-dependent kinase 10 (366 aa).

Residues 7–293 (FEKLDSIGEG…ASDAIKHPFF (287 aa)) form the Protein kinase domain. ATP-binding positions include 13–21 (IGEGTYGIV) and lysine 36. The active-site Proton acceptor is the aspartate 132. Low complexity predominate over residues 315 to 358 (FKNQNKKQNNNFNNFVQNNQTNQNNQTNQNNQTNQNNKTSQNNN). Positions 315–366 (FKNQNKKQNNNFNNFVQNNQTNQNNQTNQNNQTNQNNKTSQNNNMDSYKYSK) are disordered.

The protein belongs to the protein kinase superfamily. CMGC Ser/Thr protein kinase family. CDC2/CDKX subfamily.

It carries out the reaction L-seryl-[protein] + ATP = O-phospho-L-seryl-[protein] + ADP + H(+). The catalysed reaction is L-threonyl-[protein] + ATP = O-phospho-L-threonyl-[protein] + ADP + H(+). This is Probable cyclin-dependent kinase 10 (cdk10) from Dictyostelium discoideum (Social amoeba).